A 287-amino-acid polypeptide reads, in one-letter code: Telomere repeat-binding factor 5 (287 aa).

The HTH myb-type domain occupies 1–62; that stretch reads MGNQKLKWTA…WRNLSVPPGT (62 aa). Positions 28 to 58 form a DNA-binding region, H-T-H motif; sequence WKNILRDPEFADQLIHRSNIDLKDKWRNLSV. The disordered stretch occupies residues 58-107; sequence VPPGTQSLTNKARPAKVKEEGDTPAADANDAVTIPRPIPTIPPPPGRRTL. Pro residues predominate over residues 93-103; sequence RPIPTIPPPPG. An H15 domain is found at 119 to 193; sequence NAPRYDGVIF…SIQNFYKIPD (75 aa). The stretch at 233–259 forms a coiled coil; it reads AACKVVEAENKIDVAKLAAEEFEKMTK.

The protein belongs to the histone H1/H5 family. SMH subfamily.

It is found in the nucleus. Its subcellular location is the chromosome. Functionally, binds preferentially double-stranded telomeric repeats. The chain is Telomere repeat-binding factor 5 from Arabidopsis thaliana (Mouse-ear cress).